Here is a 342-residue protein sequence, read N- to C-terminus: Ribosomal RNA small subunit methyltransferase C (342 aa).

Belongs to the methyltransferase superfamily. RsmC family. Monomer.

It is found in the cytoplasm. It carries out the reaction guanosine(1207) in 16S rRNA + S-adenosyl-L-methionine = N(2)-methylguanosine(1207) in 16S rRNA + S-adenosyl-L-homocysteine + H(+). Specifically methylates the guanine in position 1207 of 16S rRNA in the 30S particle. The polypeptide is Ribosomal RNA small subunit methyltransferase C (Salmonella typhi).